A 538-amino-acid polypeptide reads, in one-letter code: CWF19-like protein 1 (538 aa).

2 disordered regions span residues 259-278 and 298-324; these read PDVTENPYRKSGQEASTGKQ and QGRKRSSTGRDSKSSPHPKQPRKPPQP.

The protein belongs to the CWF19 family.

This is CWF19-like protein 1 (CWF19L1) from Pongo abelii (Sumatran orangutan).